Reading from the N-terminus, the 67-residue chain is Histone H2A (67 aa).

The residue at position 60 (Q60) is an N5-methylglutamine.

It belongs to the histone H2A family. The nucleosome is a histone octamer containing two molecules each of H2A, H2B, H3 and H4 assembled in one H3-H4 heterotetramer and two H2A-H2B heterodimers. The octamer wraps approximately 147 bp of DNA.

The protein resides in the nucleus. Its subcellular location is the chromosome. Core component of nucleosome. Nucleosomes wrap and compact DNA into chromatin, limiting DNA accessibility to the cellular machineries which require DNA as a template. Histones thereby play a central role in transcription regulation, DNA repair, DNA replication and chromosomal stability. DNA accessibility is regulated via a complex set of post-translational modifications of histones, also called histone code, and nucleosome remodeling. In Olisthodiscus luteus (Marine phytoflagellate), this protein is Histone H2A.